Here is a 625-residue protein sequence, read N- to C-terminus: Probable potassium transport system protein Kup 2 (625 aa).

The next 12 membrane-spanning stretches (helical) occupy residues 15 to 35, 52 to 72, 98 to 118, 134 to 154, 164 to 184, 212 to 232, 246 to 266, 284 to 304, 336 to 356, 365 to 385, 394 to 414, and 417 to 437; these read LSFA…LYAF, ILSL…LVIV, GGWL…DGML, LSPN…FFLF, IGVY…ILGF, LALF…ALFA, WFAV…ALVL, FLPV…QAII, VYLP…VVIF, AYGI…GIIA, FKIL…AGNI, and LLTG…VMYT.

The protein belongs to the HAK/KUP transporter (TC 2.A.72) family.

The protein localises to the cell inner membrane. It carries out the reaction K(+)(in) + H(+)(in) = K(+)(out) + H(+)(out). Transport of potassium into the cell. Likely operates as a K(+):H(+) symporter. The protein is Probable potassium transport system protein Kup 2 of Legionella pneumophila (strain Corby).